The sequence spans 306 residues: N-acetylmuramic acid 6-phosphate etherase (306 aa).

The 164-residue stretch at 59-222 (TAQALGRGGR…STGVMVCLGK (164 aa)) folds into the SIS domain. The Proton donor role is filled by E87. The active site involves E118.

It belongs to the GCKR-like family. MurNAc-6-P etherase subfamily. As to quaternary structure, homodimer.

It catalyses the reaction N-acetyl-D-muramate 6-phosphate + H2O = N-acetyl-D-glucosamine 6-phosphate + (R)-lactate. The protein operates within amino-sugar metabolism; N-acetylmuramate degradation. In terms of biological role, specifically catalyzes the cleavage of the D-lactyl ether substituent of MurNAc 6-phosphate, producing GlcNAc 6-phosphate and D-lactate. This chain is N-acetylmuramic acid 6-phosphate etherase, found in Rippkaea orientalis (strain PCC 8801 / RF-1) (Cyanothece sp. (strain PCC 8801)).